The chain runs to 357 residues: MYPFSFDPSSKLPVTGIYNILLFNLFPLATYLVETFCFFRRWKIACTLLCSITVILAYRMCAVYHHVGYKDVSTFGLAYGFLIMMSLRTCFLSWRDMVPSRNDPVQISAVKRRRPFIRNARWNFVDYALSLRKYGWTDDVVPPYCRKVLTYKSLGIRTAVYVGAFCFVNCFKTRLSNWMLLPISANPWYIQVAFCVTSGFFSYLFINALYYLFAIIFVPLGIWDIAEYPLMMGNVSKTTSVNDFWSRDWHVCTKPYFRVIAWDPTIALTGSKFLASCSCFFLSALFHDFAYWSISGRCSPAFFFQLLIQPFLINLEKRIPLLRKYHYWVLIIEMLINGTYGMGVVLLKFKWKTCSQI.

Helical transmembrane passes span 13–33 (PVTG…TYLV), 44–64 (IACT…CAVY), 72–92 (VSTF…TCFL), 148–168 (VLTY…FCFV), 181–201 (LPIS…SGFF), 203–223 (YLFI…LGIW), 266–286 (IALT…SALF), 293–313 (SISG…PFLI), and 327–347 (YWVL…VVLL).

The protein resides in the mitochondrion membrane. This is an uncharacterized protein from Schizosaccharomyces pombe (strain 972 / ATCC 24843) (Fission yeast).